Consider the following 457-residue polypeptide: Siroheme synthase (457 aa).

Positions 1–204 (MDHLPIFCQL…ADEKAVNATT (204 aa)) are precorrin-2 dehydrogenase /sirohydrochlorin ferrochelatase. NAD(+) is bound by residues 22–23 (DV) and 43–44 (LT). Phosphoserine is present on Ser128. Residues 216–457 (GEVVLVGAGP…RDKLNWFSNH (242 aa)) form a uroporphyrinogen-III C-methyltransferase region. Pro225 contributes to the S-adenosyl-L-methionine binding site. The active-site Proton acceptor is Asp248. Lys270 functions as the Proton donor in the catalytic mechanism. S-adenosyl-L-methionine is bound by residues 301–303 (GGD), Ile306, 331–332 (TA), Met382, and Gly411.

In the N-terminal section; belongs to the precorrin-2 dehydrogenase / sirohydrochlorin ferrochelatase family. The protein in the C-terminal section; belongs to the precorrin methyltransferase family.

The catalysed reaction is uroporphyrinogen III + 2 S-adenosyl-L-methionine = precorrin-2 + 2 S-adenosyl-L-homocysteine + H(+). The enzyme catalyses precorrin-2 + NAD(+) = sirohydrochlorin + NADH + 2 H(+). It carries out the reaction siroheme + 2 H(+) = sirohydrochlorin + Fe(2+). Its pathway is cofactor biosynthesis; adenosylcobalamin biosynthesis; precorrin-2 from uroporphyrinogen III: step 1/1. It participates in cofactor biosynthesis; adenosylcobalamin biosynthesis; sirohydrochlorin from precorrin-2: step 1/1. It functions in the pathway porphyrin-containing compound metabolism; siroheme biosynthesis; precorrin-2 from uroporphyrinogen III: step 1/1. The protein operates within porphyrin-containing compound metabolism; siroheme biosynthesis; siroheme from sirohydrochlorin: step 1/1. Its pathway is porphyrin-containing compound metabolism; siroheme biosynthesis; sirohydrochlorin from precorrin-2: step 1/1. In terms of biological role, multifunctional enzyme that catalyzes the SAM-dependent methylations of uroporphyrinogen III at position C-2 and C-7 to form precorrin-2 via precorrin-1. Then it catalyzes the NAD-dependent ring dehydrogenation of precorrin-2 to yield sirohydrochlorin. Finally, it catalyzes the ferrochelation of sirohydrochlorin to yield siroheme. The chain is Siroheme synthase from Salmonella schwarzengrund (strain CVM19633).